Here is a 427-residue protein sequence, read N- to C-terminus: Stemphyloxin II biosynthesis cluster transcription factor sthR (427 aa).

The zn(2)-C6 fungal-type DNA-binding region spans 15-45 (CDRCRKQKLRCPPDKDDMGTCGRCLRAGVAC). The disordered stretch occupies residues 51–70 (KPRGRSQKHGISTDGTSHVS). Polar residues predominate over residues 59–69 (HGISTDGTSHV).

The protein localises to the nucleus. Its function is as follows. Transcription factor that regulates the expression of the gene cluster that mediates the biosynthesis of the phytotoxin stemphyloxin II. This chain is Stemphyloxin II biosynthesis cluster transcription factor sthR, found in Phaeosphaeria nodorum (strain SN15 / ATCC MYA-4574 / FGSC 10173) (Glume blotch fungus).